The sequence spans 353 residues: MFTLSDFDFNLPPELIAQTALPERTASRLLEVDGTVAPARLVDRRFAELPSCIARGDLLVFNDTKVLKARFFGQKASGGKIEVLVERVTGTHTALAQIRASKSPGAGTTLRLADAFDVTVGERVEPFFTLHFPQPCLTLIEQYGRLPLPPYIEHDADATDETRYQTVYASNPGAVAAPTAGLHFDQPLLEKLDAMGVERATLTLHVGAGTFQPVRVENIAEHRMHSEWYDLPQSLVDKIAATRARGGNVIAVGTTSMRALEAAARSAEAAGRPLAATQDETDIFITPGYRFRVVDRLVTNFHLPKSTLLMLVSAFAGVETIRAAYRHAIDERYRFFSYGDAMLLTRRDTPEHA.

This sequence belongs to the QueA family. As to quaternary structure, monomer.

The protein localises to the cytoplasm. It catalyses the reaction 7-aminomethyl-7-carbaguanosine(34) in tRNA + S-adenosyl-L-methionine = epoxyqueuosine(34) in tRNA + adenine + L-methionine + 2 H(+). It participates in tRNA modification; tRNA-queuosine biosynthesis. Functionally, transfers and isomerizes the ribose moiety from AdoMet to the 7-aminomethyl group of 7-deazaguanine (preQ1-tRNA) to give epoxyqueuosine (oQ-tRNA). This chain is S-adenosylmethionine:tRNA ribosyltransferase-isomerase, found in Burkholderia vietnamiensis (strain G4 / LMG 22486) (Burkholderia cepacia (strain R1808)).